Reading from the N-terminus, the 511-residue chain is MSKKPAALIILDGFGLRGETVGNAVAQAKKPNFDRYWNEFPHQTLTASGEAVGLPQGQMGNSEVGHLNIGAGRIVYQSLTRVNVAIRDGEFEKNETFLEAMTYAKENDKALHLFGLLSDGGVHSHIQHLFALLKLAKKEGLTKVYIHGFLDGRDVGQKTAKVYLKQLEEQIKEIGVGEVATLSGRYYSMDRDKRWDRVEKAYRAMAYGEGPSYQNIYDVVDDSYENGIYDEFVIPSVITRENGEPVAKVNDGDSVIFYNFRPDRAIQISNTFTNEDFRSFDRGEAHPKNLHFVCFTHFSETVDGYVAFKPVNLDNTVGEVLAQNGLKQLRIAETEKYPHVTFFMSGGREEEFPGEDRILINSPDVATYDLKPEMSAYEVKDALVADINADKHDAIILNFANPDMVGHSGMLEPTIKAIEAVDECLGAVVDAILAKGGHAIITADHGNADVLITEEGKPHTAHTTNPVPVIVTKKGATLREGGILADLSPTLLDLLGVEKPKEMTGTSLIQK.

D12 provides a ligand contact to Mn(2+). At Y36 the chain carries Phosphotyrosine. Residue S62 coordinates Mn(2+). S62 (phosphoserine intermediate) is an active-site residue. Substrate-binding positions include H123, 153-154 (RD), R185, R191, 261-264 (RPDR), and K336. D403, H407, D444, H445, and H462 together coordinate Mn(2+).

The protein belongs to the BPG-independent phosphoglycerate mutase family. In terms of assembly, monomer. It depends on Mn(2+) as a cofactor.

It catalyses the reaction (2R)-2-phosphoglycerate = (2R)-3-phosphoglycerate. The protein operates within carbohydrate degradation; glycolysis; pyruvate from D-glyceraldehyde 3-phosphate: step 3/5. Its function is as follows. Essential for rapid growth and for sporulation. Catalyzes the interconversion of 2-phosphoglycerate and 3-phosphoglycerate. In Bacillus pumilus (strain SAFR-032), this protein is 2,3-bisphosphoglycerate-independent phosphoglycerate mutase.